Here is a 461-residue protein sequence, read N- to C-terminus: Bifunctional protein GlmU (461 aa).

Residues 1–236 (MNVLLQELFI…VFEIFGINNR (236 aa)) are pyrophosphorylase. UDP-N-acetyl-alpha-D-glucosamine contacts are provided by residues Lys-27, Gln-80, 85–86 (GT), 109–111 (YGD), Gly-146, Glu-160, Asn-175, and Asn-234. Asp-111 is a Mg(2+) binding site. Asn-234 lines the Mg(2+) pocket. The tract at residues 237–257 (FQLMKLEKIYQIEQAKKLLLN) is linker. The interval 258–461 (GVTLSDYNRF…SILRKENNSK (204 aa)) is N-acetyltransferase. A UDP-N-acetyl-alpha-D-glucosamine-binding site is contributed by Lys-358. His-370 serves as the catalytic Proton acceptor. UDP-N-acetyl-alpha-D-glucosamine is bound by residues Tyr-373 and Asn-384. The acetyl-CoA site is built by Ala-387, Ala-430, and Arg-447.

In the N-terminal section; belongs to the N-acetylglucosamine-1-phosphate uridyltransferase family. It in the C-terminal section; belongs to the transferase hexapeptide repeat family. In terms of assembly, homotrimer. It depends on Mg(2+) as a cofactor.

Its subcellular location is the cytoplasm. The enzyme catalyses alpha-D-glucosamine 1-phosphate + acetyl-CoA = N-acetyl-alpha-D-glucosamine 1-phosphate + CoA + H(+). It catalyses the reaction N-acetyl-alpha-D-glucosamine 1-phosphate + UTP + H(+) = UDP-N-acetyl-alpha-D-glucosamine + diphosphate. It functions in the pathway nucleotide-sugar biosynthesis; UDP-N-acetyl-alpha-D-glucosamine biosynthesis; N-acetyl-alpha-D-glucosamine 1-phosphate from alpha-D-glucosamine 6-phosphate (route II): step 2/2. The protein operates within nucleotide-sugar biosynthesis; UDP-N-acetyl-alpha-D-glucosamine biosynthesis; UDP-N-acetyl-alpha-D-glucosamine from N-acetyl-alpha-D-glucosamine 1-phosphate: step 1/1. Its pathway is bacterial outer membrane biogenesis; LPS lipid A biosynthesis. Functionally, catalyzes the last two sequential reactions in the de novo biosynthetic pathway for UDP-N-acetylglucosamine (UDP-GlcNAc). The C-terminal domain catalyzes the transfer of acetyl group from acetyl coenzyme A to glucosamine-1-phosphate (GlcN-1-P) to produce N-acetylglucosamine-1-phosphate (GlcNAc-1-P), which is converted into UDP-GlcNAc by the transfer of uridine 5-monophosphate (from uridine 5-triphosphate), a reaction catalyzed by the N-terminal domain. This Wigglesworthia glossinidia brevipalpis protein is Bifunctional protein GlmU.